The following is a 158-amino-acid chain: MKCPYCGYPDSRVIDSRPTDDNTAIRRRRECLKCGKRFTTYEKVEQLPILVIKKDNRRELYDKEKILRGMIKACEKRPVPIKVLEEITDEIDRKIVNSMVREITSAEIGEMVMEKLKSVDEVAYVRFASVYRQFKDINTFMDELKKLLKENEEKKQKE.

Residues 3 to 34 fold into a zinc finger; the sequence is CPYCGYPDSRVIDSRPTDDNTAIRRRRECLKC. In terms of domain architecture, ATP-cone spans 49–139; it reads ILVIKKDNRR…VYRQFKDINT (91 aa).

The protein belongs to the NrdR family. Zn(2+) is required as a cofactor.

In terms of biological role, negatively regulates transcription of bacterial ribonucleotide reductase nrd genes and operons by binding to NrdR-boxes. The chain is Transcriptional repressor NrdR from Caldanaerobacter subterraneus subsp. tengcongensis (strain DSM 15242 / JCM 11007 / NBRC 100824 / MB4) (Thermoanaerobacter tengcongensis).